A 304-amino-acid polypeptide reads, in one-letter code: Large ribosomal subunit protein uL18 (304 aa).

The disordered stretch occupies residues 285 to 304 (LNALNSSAGADDDDEEEDDE). Residues 294–304 (ADDDDEEEDDE) show a composition bias toward acidic residues.

Belongs to the universal ribosomal protein uL18 family. Component of the large ribosomal subunit (LSU).

It localises to the cytoplasm. The protein resides in the nucleus. In terms of biological role, component of the ribosome, a large ribonucleoprotein complex responsible for the synthesis of proteins in the cell. The small ribosomal subunit (SSU) binds messenger RNAs (mRNAs) and translates the encoded message by selecting cognate aminoacyl-transfer RNA (tRNA) molecules. The large subunit (LSU) contains the ribosomal catalytic site termed the peptidyl transferase center (PTC), which catalyzes the formation of peptide bonds, thereby polymerizing the amino acids delivered by tRNAs into a polypeptide chain. The nascent polypeptides leave the ribosome through a tunnel in the LSU and interact with protein factors that function in enzymatic processing, targeting, and the membrane insertion of nascent chains at the exit of the ribosomal tunnel. The protein is Large ribosomal subunit protein uL18 (RPL5A) of Oryza sativa subsp. indica (Rice).